Reading from the N-terminus, the 417-residue chain is Serine hydroxymethyltransferase (417 aa).

Residues leucine 120 and 124–126 (GHL) each bind (6S)-5,6,7,8-tetrahydrofolate. The residue at position 229 (lysine 229) is an N6-(pyridoxal phosphate)lysine.

Belongs to the SHMT family. In terms of assembly, homodimer. Requires pyridoxal 5'-phosphate as cofactor.

The protein localises to the cytoplasm. It carries out the reaction (6R)-5,10-methylene-5,6,7,8-tetrahydrofolate + glycine + H2O = (6S)-5,6,7,8-tetrahydrofolate + L-serine. Its pathway is one-carbon metabolism; tetrahydrofolate interconversion. It functions in the pathway amino-acid biosynthesis; glycine biosynthesis; glycine from L-serine: step 1/1. Its function is as follows. Catalyzes the reversible interconversion of serine and glycine with tetrahydrofolate (THF) serving as the one-carbon carrier. This reaction serves as the major source of one-carbon groups required for the biosynthesis of purines, thymidylate, methionine, and other important biomolecules. Also exhibits THF-independent aldolase activity toward beta-hydroxyamino acids, producing glycine and aldehydes, via a retro-aldol mechanism. In Anaeromyxobacter dehalogenans (strain 2CP-C), this protein is Serine hydroxymethyltransferase.